Here is a 1317-residue protein sequence, read N- to C-terminus: MNRTSPDSERPPGSEPVWERPWSVEEIRRSSQNWSLAADAGLLQFLQEFSQQTISRTHEIKKQVDGLIQETKATHCRLHNVFNDFLMLSNTQFIENRVYDEEVEEQALKAEAEKSEQEKTREQKEVDLIPKVREAVNYGLQVLDSAFEQLDIKAGNSDSEEEDANERVELILEPKDLYIDRPLPYLIGSKLFMEQEDVGLGELSSEEGSVGSDRGSIVDSEEEKEEEESDEDFASRSDNDQNQHTTRMSDEEEDDDGDLFADSEKEGDDIEDIEENTKSKRPTSFADELAARIKGDMSNQLKEEQIADGKPQKTMKEKKEKRTPPDDEEDILFPPPKLTDEDFSPFGSRGGLFSGQGLFDDEDESDLFRETSRDRPAQAPVSEESSSPKPGKKIPAGAVSVFLDTSAPSLKEFQKHEQPTPGKNPHLPTPAGLFDDNDDDDDNFFVPSCNKPPKTDKVKSTSIIFDDEEGDLFREKPAPLPVASVSQADENTTRADKTITLPSSKNPKLVSETKTQKGLFSDEEDSEDLFSSQNSSKSKSASLLSSQLPTSGSLFGDEDEEDNLFGSAPAKKQVSSQQPQSQEKPKPSEQPKKKASALLFSSDEEDQWNITDSHTKLATDRKSKGELWDSGTIQGQEVKAVKKTNLFEEDDDEADLFAIAKDSQKKTQRTSLLFEDDDDSGSSLFGFPPASVPPATMKKESISKVPSLFSDEEENEVPSRVKSVDVKVGNGKEADVAKVTEKEGLLTASDQEAAGPSDLFSSSPLDKGTKGRTKTVLSLFDEEEDKVEDQSNTHVSKNDAEKGLKTDGRPKSTGVFQDEELLFSHKLQKDNDPDVDLFAGTKKTRVSVPLDGSLFGDDEDYDLFSSAKTQPVVPEKKGALKKDRPVSLKNEEAPESTEGSKEKSLWKAETPQDSSGLTPFKSREPSSRIGKIQANLAINPAALLPTAALQIPGTKPALCELAFPSSEPGRSHGPESVPTLAGSEEAGVSFDLPAQADTLHSANKSRVKVRGKRRPQTRAARRLAAQESSESEDMSVSRGPVAQLASSPILPNGHQPHLQPRMASGEISSEKAMAPAAPPWESGPALSAVDRSFFVASLPQTGNEADLFDSGDIFPKSIGSQSMEGTKVKAAETPAHLSGGSKEKSLVFPALSEASSTDDLFQTVKPRPAKKRNPFPLLEDEDDLFADRKGKKNELKSDSHQDIISKTQDIFEDDIFATEAVKPFQKKREKERTLEPNLFDDNIDIFADLNVKPKEKSKKKVEAKSVFDDDTDDIFSSGLQAKKSKPKSQSAEATSELRSDHKVSNIFDDPLNAFGSQ.

A sufficient for interaction with WASHC3, WASHC4 and WASHC5; required for interaction with WASHC1 region spans residues 1–219 (MNRTSPDSER…VGSDRGSIVD (219 aa)). Phosphoserine is present on residues Ser157, Ser159, Ser204, Ser205, and Ser209. Low complexity predominate over residues 201-213 (GELSSEEGSVGSD). Residues 201-630 (GELSSEEGSV…RKSKGELWDS (430 aa)) are disordered. Acidic residues-rich tracts occupy residues 219 to 232 (DSEE…SDED) and 250 to 274 (DEEE…EDIE). Ser284 is modified (phosphoserine). 2 stretches are compositionally biased toward basic and acidic residues: residues 289-325 (LAAR…RTPP) and 366-376 (DLFRETSRDRP). Residue Thr323 is modified to Phosphothreonine. The tract at residues 348 to 582 (SRGGLFSGQG…QVSSQQPQSQ (235 aa)) is sufficient for interaction with CCDC93. The segment at 349 to 1317 (RGGLFSGQGL…DDPLNAFGSQ (969 aa)) is interaction with VPS35. An LFa 1 motif is present at residues 358 to 368 (LFDDEDESDLF). Over residues 379 to 399 (APVSEESSSPKPGKKIPAGAV) the composition is skewed to low complexity. A phosphoserine mark is found at Ser385 and Ser387. 2 short sequence motifs (LFa) span residues 433–445 (LFDD…DNFF) and 464–473 (IFDDEEGDLF). Polar residues predominate over residues 500 to 518 (TLPSSKNPKLVSETKTQKG). Short sequence motifs (LFa) lie at residues 519–530 (LFSDEEDSEDLF) and 554–565 (LFGDEDEEDNLF). Residues Ser521 and Ser526 each carry the phosphoserine modification. Low complexity predominate over residues 529–548 (LFSSQNSSKSKSASLLSSQL). Over residues 569–582 (PAKKQVSSQQPQSQ) the composition is skewed to low complexity. Residues 583–592 (EKPKPSEQPK) show a composition bias toward basic and acidic residues. Residues 599-611 (LFSSDEEDQWNIT) carry the LFa 6 motif. Residues Ser601 and Ser602 each carry the phosphoserine modification. The span at 613–627 (SHTKLATDRKSKGEL) shows a compositional bias: basic and acidic residues. Short sequence motifs (LFa) lie at residues 646-657 (LFEEDDDEADLF) and 673-685 (LFED…SSLF). Positions 667 to 817 (TQRTSLLFED…GRPKSTGVFQ (151 aa)) are disordered. The residue at position 710 (Ser710) is a Phosphoserine. Residues 717-744 (VPSRVKSVDVKVGNGKEADVAKVTEKEG) are compositionally biased toward basic and acidic residues. Residues Ser763 and Ser778 each carry the phosphoserine modification. Residues 788 to 810 (EDQSNTHVSKNDAEKGLKTDGRP) are compositionally biased toward basic and acidic residues. 2 consecutive short sequence motifs (LFa) follow at residues 815–823 (VFQDEELLF) and 832–838 (DPDVDLF). At Ser853 the chain carries Phosphoserine. An LFa 11 motif is present at residues 854 to 864 (LFGDDEDYDLF). Disordered stretches follow at residues 867 to 926 (AKTQ…REPS) and 960 to 1079 (ELAF…AAPP). Residues 874-906 (PEKKGALKKDRPVSLKNEEAPESTEGSKEKSLW) show a composition bias toward basic and acidic residues. An interaction with phospholipids region spans residues 912 to 1317 (QDSSGLTPFK…DDPLNAFGSQ (406 aa)). The span at 1003 to 1021 (NKSRVKVRGKRRPQTRAAR) shows a compositional bias: basic residues. Positions 1004-1022 (KSRVKVRGKRRPQTRAARR) are required for interaction with F-actin-capping protein subunit alpha (CAPZA1 or CAPZA2 or CAPZA3). A phosphoserine mark is found at Ser1029, Ser1047, Ser1064, and Ser1092. The short motif at 1107 to 1114 (LFDSGDIF) is the LFa 12 element. A disordered region spans residues 1119 to 1141 (GSQSMEGTKVKAAETPAHLSGGS). 6 short sequence motifs (LFa) span residues 1147-1161 (VFPA…DDLF), 1177-1185 (LLEDEDDLF), 1210-1216 (IFEDDIF), 1238-1246 (LFDDNIDIF), 1266-1275 (VFDDDTDDIF), and 1306-1314 (IFDDPLNAF). Ser1152, Ser1155, and Ser1156 each carry phosphoserine. The disordered stretch occupies residues 1158–1183 (DDLFQTVKPRPAKKRNPFPLLEDEDD). A disordered region spans residues 1277–1317 (SGLQAKKSKPKSQSAEATSELRSDHKVSNIFDDPLNAFGSQ). At Ser1316 the chain carries Phosphoserine.

It belongs to the FAM21 family. In terms of assembly, component of the WASH core complex also described as WASH regulatory complex SHRC composed of WASHC1, WASHC2, WASHC3, WASHC4 and WASHC5; in the complex interacts (via N-terminus) directly with WASHC1. The WASH core complex associates via WASHC2 with the F-actin-capping protein dimer (formed by CAPZA1, CAPZA2 or CAPZA3 and CAPZB) in a transient or substoichiometric manner which was initially described as WASH complex. Interacts with VPS35; mediates the association with the retromer CSC complex. Interacts with FKBP15. Interacts with CCDC93, CCDC22, C16orf62 homolog; indicative for an association of the WASH core complex with the CCC complex. Directly interacts with TBC1D23.

Its subcellular location is the early endosome membrane. The protein localises to the cell membrane. Functionally, acts as a component of the WASH core complex that functions as a nucleation-promoting factor (NPF) at the surface of endosomes, where it recruits and activates the Arp2/3 complex to induce actin polymerization, playing a key role in the fission of tubules that serve as transport intermediates during endosome sorting. Mediates the recruitment of the WASH core complex to endosome membranes via binding to phospholipids and VPS35 of the retromer CSC. Mediates the recruitment of the F-actin-capping protein dimer to the WASH core complex probably promoting localized F-actin polymerization needed for vesicle scission. Via its C-terminus binds various phospholipids, most strongly phosphatidylinositol 4-phosphate (PtdIns-(4)P), phosphatidylinositol 5-phosphate (PtdIns-(5)P) and phosphatidylinositol 3,5-bisphosphate (PtdIns-(3,5)P2). Involved in the endosome-to-plasma membrane trafficking and recycling of SNX27-retromer-dependent cargo proteins, such as GLUT1. Required for the association of DNAJC13, ENTR1, ANKRD50 with retromer CSC subunit VPS35. Required for the endosomal recruitment of CCC complex subunits COMMD1, CCDC93 and C16orf62 homolog. The polypeptide is WASH complex subunit 2 (Cricetulus griseus (Chinese hamster)).